A 268-amino-acid chain; its full sequence is Large ribosomal subunit protein bL9m (268 aa).

The N-terminal 52 residues, methionine 1–glycine 52, are a transit peptide targeting the mitochondrion.

Belongs to the bacterial ribosomal protein bL9 family. Component of the mitochondrial ribosome large subunit (39S) which comprises a 16S rRNA and about 50 distinct proteins.

Its subcellular location is the mitochondrion. The protein is Large ribosomal subunit protein bL9m (MRPL9) of Bos taurus (Bovine).